Here is a 263-residue protein sequence, read N- to C-terminus: Ribosomal RNA small subunit methyltransferase A (263 aa).

N20, L22, G47, E68, D90, and N110 together coordinate S-adenosyl-L-methionine.

This sequence belongs to the class I-like SAM-binding methyltransferase superfamily. rRNA adenine N(6)-methyltransferase family. RsmA subfamily.

It localises to the cytoplasm. The enzyme catalyses adenosine(1518)/adenosine(1519) in 16S rRNA + 4 S-adenosyl-L-methionine = N(6)-dimethyladenosine(1518)/N(6)-dimethyladenosine(1519) in 16S rRNA + 4 S-adenosyl-L-homocysteine + 4 H(+). Functionally, specifically dimethylates two adjacent adenosines (A1518 and A1519) in the loop of a conserved hairpin near the 3'-end of 16S rRNA in the 30S particle. May play a critical role in biogenesis of 30S subunits. The polypeptide is Ribosomal RNA small subunit methyltransferase A (Chlorobium limicola (strain DSM 245 / NBRC 103803 / 6330)).